The sequence spans 338 residues: Anthranilate phosphoribosyltransferase (338 aa).

Residues Gly-81, 84 to 85, Ser-89, 91 to 94, 109 to 117, and Ala-121 each bind 5-phospho-alpha-D-ribose 1-diphosphate; these read GD, NVST, and KHGNRALSS. Gly-81 contacts anthranilate. Ser-93 lines the Mg(2+) pocket. Asn-112 provides a ligand contact to anthranilate. Arg-167 is an anthranilate binding site. Mg(2+)-binding residues include Asp-226 and Glu-227.

Belongs to the anthranilate phosphoribosyltransferase family. In terms of assembly, homodimer. It depends on Mg(2+) as a cofactor.

It catalyses the reaction N-(5-phospho-beta-D-ribosyl)anthranilate + diphosphate = 5-phospho-alpha-D-ribose 1-diphosphate + anthranilate. Its pathway is amino-acid biosynthesis; L-tryptophan biosynthesis; L-tryptophan from chorismate: step 2/5. Catalyzes the transfer of the phosphoribosyl group of 5-phosphorylribose-1-pyrophosphate (PRPP) to anthranilate to yield N-(5'-phosphoribosyl)-anthranilate (PRA). The protein is Anthranilate phosphoribosyltransferase of Rhodopseudomonas palustris (strain TIE-1).